The primary structure comprises 954 residues: Glycine dehydrogenase (decarboxylating) (954 aa).

The residue at position 702 (Lys-702) is an N6-(pyridoxal phosphate)lysine.

Belongs to the GcvP family. As to quaternary structure, the glycine cleavage system is composed of four proteins: P, T, L and H. Pyridoxal 5'-phosphate serves as cofactor.

The catalysed reaction is N(6)-[(R)-lipoyl]-L-lysyl-[glycine-cleavage complex H protein] + glycine + H(+) = N(6)-[(R)-S(8)-aminomethyldihydrolipoyl]-L-lysyl-[glycine-cleavage complex H protein] + CO2. Functionally, the glycine cleavage system catalyzes the degradation of glycine. The P protein binds the alpha-amino group of glycine through its pyridoxal phosphate cofactor; CO(2) is released and the remaining methylamine moiety is then transferred to the lipoamide cofactor of the H protein. In Xanthomonas euvesicatoria pv. vesicatoria (strain 85-10) (Xanthomonas campestris pv. vesicatoria), this protein is Glycine dehydrogenase (decarboxylating).